The primary structure comprises 522 residues: Sugar transport protein 1 (522 aa).

Topologically, residues 1–22 are cytoplasmic; the sequence is MPAGGFVVGDGQKAYPGKLTPF. A helical transmembrane segment spans residues 23–43; the sequence is VLFTCVVAAMGGLIFGYDIGI. Residues 44-79 are Extracellular-facing; the sequence is SGGVTSMPSFLKRFFPSVYRKQQEDASTNQYCQYDS. Residues 80–100 form a helical membrane-spanning segment; sequence PTLTMFTSSLYLAALISSLVA. Topologically, residues 101–117 are cytoplasmic; that stretch reads STVTRKFGRRLSMLFGG. The helical transmembrane segment at 118–138 threads the bilayer; it reads ILFCAGALINGFAKHVWMLIV. The Extracellular portion of the chain corresponds to 139 to 140; that stretch reads GR. A helical membrane pass occupies residues 141 to 161; that stretch reads ILLGFGIGFANQAVPLYLSEM. Residues 162–171 are Cytoplasmic-facing; the sequence is APYKYRGALN. Residues 172 to 192 traverse the membrane as a helical segment; sequence IGFQLSITIGILVAEVLNYFF. The Extracellular portion of the chain corresponds to 193–202; it reads AKIKGGWGWR. The helical transmembrane segment at 203 to 223 threads the bilayer; that stretch reads LSLGGAVVPALIITIGSLVLP. Residues 224–289 lie on the Cytoplasmic side of the membrane; sequence DTPNSMIERG…YRPHLTMAVM (66 aa). Serine 252 carries the post-translational modification Phosphoserine. A helical transmembrane segment spans residues 290 to 310; it reads IPFFQQLTGINVIMFYAPVLF. Over 311-321 the chain is Extracellular; that stretch reads NTIGFTTDASL. Residues 322–342 form a helical membrane-spanning segment; sequence MSAVVTGSVNVAATLVSIYGV. The Cytoplasmic segment spans residues 343–348; the sequence is DRWGRR. Residues 349 to 369 traverse the membrane as a helical segment; the sequence is FLFLEGGTQMLICQAVVAACI. Residues 370–384 lie on the Extracellular side of the membrane; that stretch reads GAKFGVDGTPGELPK. A helical membrane pass occupies residues 385-405; sequence WYAIVVVTFICIYVAGFAWSW. The Cytoplasmic segment spans residues 406–427; that stretch reads GPLGWLVPSEIFPLEIRSAAQS. The chain crosses the membrane as a helical span at residues 428-448; sequence ITVSVNMIFTFIIAQIFLTML. Topologically, residues 449 to 452 are extracellular; that stretch reads CHLK. A helical membrane pass occupies residues 453–473; that stretch reads FGLFLVFAFFVVVMSIFVYIF. The Cytoplasmic segment spans residues 474 to 522; sequence LPETKGIPIEEMGQVWRSHWYWSRFVEDGEYGNALEMGKNSNQAGTKHV.

Belongs to the major facilitator superfamily. Sugar transporter (TC 2.A.1.1) family. In terms of tissue distribution, mostly expressed in young leaves, especially in guard cells (at protein level). Also present in roots.

It is found in the cell membrane. Functionally, major hexose transporter. Mediates an active uptake of hexoses, by sugar/hydrogen symport. Can transport glucose, 3-O-methylglucose, fructose, xylose, mannose, galactose, fucose, 2-deoxyglucose and arabinose. Confers sensitivity to galactose in seedlings. This chain is Sugar transport protein 1 (STP1), found in Arabidopsis thaliana (Mouse-ear cress).